A 388-amino-acid chain; its full sequence is F-box protein At4g00893 (388 aa).

The tract at residues 1-30 (MLPSPSVHMASPPPSLNMASHPPSPATASR) is disordered. The F-box domain occupies 42 to 88 (NPSFADLPSSLIEEIMLLLVLKDNIRASAACKSWYEAGVSVRVVDKH).

In Arabidopsis thaliana (Mouse-ear cress), this protein is F-box protein At4g00893.